Reading from the N-terminus, the 260-residue chain is Sodium channel modifier 1 (260 aa).

Positions 4 to 20 match the Bipartite nuclear localization signal motif; that stretch reads KRDGDDSSQLNVLKKRR. The Matrin-type zinc-finger motif lies at 42–74; the sequence is YACTVCHHRPVFNTIDMLSVHRTGKKHLGGLQR. Positions 143–260 are disordered; the sequence is RNVYDPHSGP…EEEPPALPPS (118 aa). A compositionally biased stretch (polar residues) spans 166-187; sequence PGPSQPHTSLHSPPTGPCSSPT. Positions 202–221 are enriched in basic and acidic residues; sequence KGEEKFRKEIADPERERNME. A compositionally biased stretch (acidic residues) spans 245–254; sequence VEFDSDEEEP.

In terms of assembly, component of the minor spliceosome, which splices U12-type introns.

The protein resides in the nucleus. The protein localises to the nucleoplasm. It localises to the nucleus speckle. Its function is as follows. As a component of the minor spliceosome, involved in the splicing of U12-type introns in pre-mRNAs. The protein is Sodium channel modifier 1 (scnm1) of Xenopus laevis (African clawed frog).